Here is a 473-residue protein sequence, read N- to C-terminus: Photosystem II CP43 reaction center protein (473 aa).

A propeptide spanning residues 1–14 (MKTLYSLRRFYHVE) is cleaved from the precursor. At Thr-15 the chain carries N-acetylthreonine. At Thr-15 the chain carries Phosphothreonine. Helical transmembrane passes span 69-93 (LFEVAHFVPEKPMYEQGLILLPHLA), 134-155 (LIGPETLEESFPFFGYVWKDKN), 178-200 (KAVWFGGVYDTWAPGGGDVRKIT), 255-275 (KPFAWARRAFIWSGEAYLSYS), and 291-312 (WFNNTAYPSEFYGPTGPEASQA). Glu-367 lines the [CaMn4O5] cluster pocket. The helical transmembrane segment at 447-471 (RARAAAAGFEKGIDRETEPVFFMNP) threads the bilayer.

This sequence belongs to the PsbB/PsbC family. PsbC subfamily. In terms of assembly, PSII is composed of 1 copy each of membrane proteins PsbA, PsbB, PsbC, PsbD, PsbE, PsbF, PsbH, PsbI, PsbJ, PsbK, PsbL, PsbM, PsbT, PsbX, PsbY, PsbZ, Psb30/Ycf12, at least 3 peripheral proteins of the oxygen-evolving complex and a large number of cofactors. It forms dimeric complexes. The cofactor is Binds multiple chlorophylls and provides some of the ligands for the Ca-4Mn-5O cluster of the oxygen-evolving complex. It may also provide a ligand for a Cl- that is required for oxygen evolution. PSII binds additional chlorophylls, carotenoids and specific lipids..

It is found in the plastid. It localises to the chloroplast thylakoid membrane. Its function is as follows. One of the components of the core complex of photosystem II (PSII). It binds chlorophyll and helps catalyze the primary light-induced photochemical processes of PSII. PSII is a light-driven water:plastoquinone oxidoreductase, using light energy to abstract electrons from H(2)O, generating O(2) and a proton gradient subsequently used for ATP formation. The protein is Photosystem II CP43 reaction center protein of Staurastrum punctulatum (Green alga).